Here is a 526-residue protein sequence, read N- to C-terminus: GMP synthase [glutamine-hydrolyzing] (526 aa).

The Glutamine amidotransferase type-1 domain occupies 9-208; sequence RILILDFGSQ…LVNICGCKQL (200 aa). Cysteine 86 acts as the Nucleophile in catalysis. Residues histidine 182 and glutamate 184 contribute to the active site. Residues 209-401 form the GMPS ATP-PPase domain; it reads WTPGRIIEDA…LGLPYDMVYR (193 aa). Position 236-242 (236-242) interacts with ATP; the sequence is SGGVDSS.

In terms of assembly, homodimer.

It catalyses the reaction XMP + L-glutamine + ATP + H2O = GMP + L-glutamate + AMP + diphosphate + 2 H(+). It functions in the pathway purine metabolism; GMP biosynthesis; GMP from XMP (L-Gln route): step 1/1. Functionally, catalyzes the synthesis of GMP from XMP. This Hahella chejuensis (strain KCTC 2396) protein is GMP synthase [glutamine-hydrolyzing].